The chain runs to 642 residues: Threonine--tRNA ligase (642 aa).

The TGS domain occupies 1–61 (MPVITLPDGS…ETDAELSIIT (61 aa)). The segment at 243–534 (DHRKIGKQLD…LIEEYAGRFP (292 aa)) is catalytic. Residues cysteine 334, histidine 385, and histidine 511 each coordinate Zn(2+).

This sequence belongs to the class-II aminoacyl-tRNA synthetase family. Homodimer. Zn(2+) serves as cofactor.

The protein resides in the cytoplasm. The enzyme catalyses tRNA(Thr) + L-threonine + ATP = L-threonyl-tRNA(Thr) + AMP + diphosphate + H(+). Catalyzes the attachment of threonine to tRNA(Thr) in a two-step reaction: L-threonine is first activated by ATP to form Thr-AMP and then transferred to the acceptor end of tRNA(Thr). Also edits incorrectly charged L-seryl-tRNA(Thr). The protein is Threonine--tRNA ligase of Shewanella oneidensis (strain ATCC 700550 / JCM 31522 / CIP 106686 / LMG 19005 / NCIMB 14063 / MR-1).